A 336-amino-acid chain; its full sequence is MAMQAHYQAEATEEENFGPQAITRLEQCGINANDVKKLEDAGFHTVEAVAYAPKKELLNIKGISEAKAEKILAEAAKLVPMGFTTATEFHQRRSEIIQIGTGSKELDKLLQGGIETGSITEMFGEFRTGKTQLCHTLAVTCQLPIDRGGGEGKAMYIDTEGTFRPERLLAVAERYGLSGSDVLDNVAYARAFNTDHQTQLLYQASAMMAESRYALLIVDSATALYRTDYSGRGELSARQMHLARFLRMLLRLADEFGVAVVITNQVVAQVDGAAMFAADPKKPIGGNIIAHASTTRLYLRKGRGETRICKIYDSPCLPEAEAMFAINADGVGDAKD.

In terms of domain architecture, HhH spans 45–74; it reads TVEAVAYAPKKELLNIKGISEAKAEKILAE. 124–131 is an ATP binding site; the sequence is GEFRTGKT. Positions 242–257 match the Nuclear export signal motif; the sequence is LARFLRMLLRLADEFG.

This sequence belongs to the RecA family. RAD51 subfamily. Forms linear homooligomers, giving rise to a RAD51 nucleoprotein filament, which is essential for strand-pairing reactions during DNA recombination.

It is found in the nucleus. The protein localises to the cytoplasm. The protein resides in the chromosome. Its function is as follows. Plays an important role in homologous strand exchange, a key step in DNA repair through homologous recombination (HR). Binds to single-stranded DNA in an ATP-dependent manner to form nucleoprotein filaments which are essential for the homology search and strand exchange. Catalyzes the recognition of homology and strand exchange between homologous DNA partners to form a joint molecule between a processed DNA break and the repair template. Recruited to resolve stalled replication forks during replication stress. Also involved in interstrand cross-link repair. This is DNA repair protein RAD51 homolog B (rad51-b) from Xenopus laevis (African clawed frog).